The sequence spans 214 residues: A-type ATP synthase subunit D (214 aa).

This sequence belongs to the V-ATPase D subunit family. In terms of assembly, has multiple subunits with at least A(3), B(3), C, D, E, F, H, I and proteolipid K(x).

The protein resides in the cell membrane. Its function is as follows. Component of the A-type ATP synthase that produces ATP from ADP in the presence of a proton gradient across the membrane. In Thermococcus kodakarensis (strain ATCC BAA-918 / JCM 12380 / KOD1) (Pyrococcus kodakaraensis (strain KOD1)), this protein is A-type ATP synthase subunit D.